The primary structure comprises 235 residues: Serine/arginine-rich splicing factor 7 (235 aa).

The region spanning 11 to 84 (TKVYVGNLGT…SRVRVELSTG (74 aa)) is the RRM domain. Lysine 24 carries the post-translational modification N6-acetyllysine; alternate. Lysine 24 participates in a covalent cross-link: Glycyl lysine isopeptide (Lys-Gly) (interchain with G-Cter in SUMO2); alternate. Serine 32 is subject to Phosphoserine. A sufficient for interaction with NXF1 region spans residues 81–98 (LSTGMPRRSRFDRPPARR). The segment at 104–120 (DRCYECGEKGHYAYDCH) adopts a CCHC-type zinc-finger fold. The segment covering 123-180 (SRRRRSRSRSRSHSRSRGRRYSRSRSRSRGRRSRSASPRRSRSVSLRRSRSASLRRSR) has biased composition (basic residues). The tract at residues 123–235 (SRRRRSRSRS…RRSASPERVD (113 aa)) is disordered. 4 repeat units span residues 153–160 (RRSRSASP), 161–168 (RRSRSVSL), 169–176 (RRSRSASL), and 177–184 (RRSRSGSI). The 6 X 8 AA repeats of R-R-S-R-S-X-S-X stretch occupies residues 153–223 (RRSRSASPRR…SPKRSRSPSG (71 aa)). Phosphoserine is present on residues serine 163, serine 165, and serine 167. 5 positions are modified to phosphoserine: serine 181, serine 183, serine 189, serine 191, and serine 193. The segment covering 187–219 (SRSRSRSRSRSRSLSRPRSSRSKSRSPSPKRSR) has biased composition (basic residues). Residues 208 to 215 (SKSRSPSP) form a 5; approximate repeat. One copy of the 6; approximate repeat lies at 216–223 (KRSRSPSG). Phosphoserine is present on residues serine 228 and serine 230.

It belongs to the splicing factor SR family. As to quaternary structure, found in large molecular weight complexes containing CCNL1 and the p110 isoforms of either CDC2L1 or CDC2L2. Interacts with CCNL2 and CPSF6. Interacts with NXF1. Interacts with YTHDC1. Extensively phosphorylated on serine residues in the RS domain.

It is found in the nucleus. It localises to the cytoplasm. In terms of biological role, required for pre-mRNA splicing. Represses the splicing of MAPT/Tau exon 10. May function as export adapter involved in mRNA nuclear export such as of histone H2A. Binds mRNA which is thought to be transferred to the NXF1-NXT1 heterodimer for export (TAP/NXF1 pathway); enhances NXF1-NXT1 RNA-binding activity. RNA-binding is semi-sequence specific. In Bos taurus (Bovine), this protein is Serine/arginine-rich splicing factor 7 (SRSF7).